The primary structure comprises 146 residues: 3-dehydroquinate dehydratase (146 aa).

The Proton acceptor role is filled by Tyr-22. Substrate contacts are provided by Asn-73, His-79, and Asp-86. Catalysis depends on His-99, which acts as the Proton donor. Residues 100–101 (LS) and Arg-110 each bind substrate.

This sequence belongs to the type-II 3-dehydroquinase family. Homododecamer.

It catalyses the reaction 3-dehydroquinate = 3-dehydroshikimate + H2O. It participates in metabolic intermediate biosynthesis; chorismate biosynthesis; chorismate from D-erythrose 4-phosphate and phosphoenolpyruvate: step 3/7. In terms of biological role, catalyzes a trans-dehydration via an enolate intermediate. The chain is 3-dehydroquinate dehydratase from Synechococcus sp. (strain CC9605).